The sequence spans 233 residues: Short chain dehydrogenase trt9 (233 aa).

The NADP(+) site is built by Asp33, Arg95, Tyr127, Lys131, and Val160. Tyr127 (proton donor) is an active-site residue. The active-site Lowers pKa of active site Tyr is the Lys131.

This sequence belongs to the short-chain dehydrogenases/reductases (SDR) family.

It functions in the pathway secondary metabolite biosynthesis; terpenoid biosynthesis. In terms of biological role, short chain dehydrogenase; part of the gene cluster that mediates the biosynthesis of terretonin, a fungal meroterpenoid that acts as a mycotoxin. The first step of the pathway is the synthesis of 3,5-dimethylorsellinic acid (DMOA) by the polyketide synthase trt4. DMOA is then prenylated into farnesyl-DMOA by the polyprenyl transferase trt2. Methylation by the methyltransferase trt5 then leads to farnesyl-DMOA methyl ester which is further subject to epoxidation by the FAD-dependent monooxygenase trt8 to yield epoxyfarnesyl-DMOA methyl ester. Cyclization of epoxyfarnesyl-DMOA methyl ester by the terpene cyclase trt1 leads to a tetracycle intermediate which is in turn converted to preterretonin. Dehydrogenase trt9 comes next to transform preterretonin to preterrenoid. The FAD-dependent monooxygenase trt3 is then required for the C-hydroxylation at C16 of preterrenoid to yield terrenoid. The cytochrome P450 trt6 catalyzes three successive oxidations to transform terrenoid into an unstable intermediate, which then undergoes the D-ring expansion and unusual rearrangement of the methoxy group to afford the core skeleton of terretonin. Trt14 catalyzes the D-ring expansion of terretonin involving intramolecular methoxy rearrangement as well as the hydrolysis of the expanded D-ring and the methyl ester moiety. Finally, the nonheme iron-dependent dioxygenase trt7 accomplishes the last two oxidation reactions steps to complete the biosynthesis of terretonin. Terretonin C is produced via spontaneous decarboxylation of the terretonin precursor. Another shunt product of the terretonin biosynthesis is dihydrofarnesyl-DMOA, derived from epoxyfarnesyl-DMOA through hydrolysis of the epoxide. The polypeptide is Short chain dehydrogenase trt9 (Aspergillus terreus (strain NIH 2624 / FGSC A1156)).